Here is a 296-residue protein sequence, read N- to C-terminus: MSDGEEGTPMKHPKPASSVEEAPITTTPFPDLLSSMQAYYGGAAPAAFYASTVGSPSPHPYMWRNQHRFILPYGIPMQYPALFLPGGIFTHPIVPTDPNLAPTSGEVGRKISDEKGRTSAKKSIGVSGSTSFAVDKGAENQKAASSSDNDCPSLSSENGVDGSLEVRSNPLDVAAPGAIVVHDGMLPDQRVNDERELKRQRRKQSNRESARRSRLRKQAKSDELQERLDNLSKENRILRKNLQRISEACAEVTSENHSIKEELLRNYGPDGLTRLPRNLQEAAGELLIEDDTDGET.

Disordered regions lie at residues 1-27 (MSDG…ITTT), 98-165 (PNLA…GSLE), and 190-223 (RVND…KSDE). Basic and acidic residues predominate over residues 107–117 (VGRKISDEKGR). Residues 145–156 (SSSDNDCPSLSS) show a composition bias toward low complexity. The bZIP domain occupies 196–259 (ELKRQRRKQS…AEVTSENHSI (64 aa)). Residues 198-220 (KRQRRKQSNRESARRSRLRKQAK) form a basic motif region. The interval 224–245 (LQERLDNLSKENRILRKNLQRI) is leucine-zipper.

The protein belongs to the bZIP family. In terms of assembly, binds DNA as a dimer.

It localises to the nucleus. Its function is as follows. Binds to the G-box-like motif (5'-ACGTGGC-3') of the chalcone synthase (CHS) gene promoter. G-box and G-box-like motifs are defined in promoters of certain plant genes which are regulated by such diverse stimuli as light-induction or hormone control. In Petroselinum crispum (Parsley), this protein is Light-inducible protein CPRF3 (CPRF3).